Consider the following 208-residue polypeptide: Uracil phosphoribosyltransferase (208 aa).

Residues R78, R103, and 130 to 138 contribute to the 5-phospho-alpha-D-ribose 1-diphosphate site; that span reads DPMLATGGT. Residues I193 and 198 to 200 contribute to the uracil site; that span reads GDA. 5-phospho-alpha-D-ribose 1-diphosphate is bound at residue D199.

The protein belongs to the UPRTase family. Requires Mg(2+) as cofactor.

The catalysed reaction is UMP + diphosphate = 5-phospho-alpha-D-ribose 1-diphosphate + uracil. The protein operates within pyrimidine metabolism; UMP biosynthesis via salvage pathway; UMP from uracil: step 1/1. Its activity is regulated as follows. Allosterically activated by GTP. Functionally, catalyzes the conversion of uracil and 5-phospho-alpha-D-ribose 1-diphosphate (PRPP) to UMP and diphosphate. This is Uracil phosphoribosyltransferase from Desulfotalea psychrophila (strain LSv54 / DSM 12343).